Consider the following 488-residue polypeptide: 3-octaprenyl-4-hydroxybenzoate carboxy-lyase (488 aa).

N172 serves as a coordination point for Mn(2+). Residues 175–177, 189–191, and 194–195 each bind prenylated FMN; these read IYR, RWL, and RG. Position 238 (E238) interacts with Mn(2+). Catalysis depends on D287, which acts as the Proton donor.

This sequence belongs to the UbiD family. As to quaternary structure, homohexamer. It depends on prenylated FMN as a cofactor. The cofactor is Mn(2+).

It is found in the cell membrane. The enzyme catalyses a 4-hydroxy-3-(all-trans-polyprenyl)benzoate + H(+) = a 2-(all-trans-polyprenyl)phenol + CO2. Its pathway is cofactor biosynthesis; ubiquinone biosynthesis. In terms of biological role, catalyzes the decarboxylation of 3-octaprenyl-4-hydroxy benzoate to 2-octaprenylphenol, an intermediate step in ubiquinone biosynthesis. This chain is 3-octaprenyl-4-hydroxybenzoate carboxy-lyase, found in Ectopseudomonas mendocina (strain ymp) (Pseudomonas mendocina).